The sequence spans 107 residues: MNIIINMLGFNIFIETVYKFSDHTMERYHPYQRAPWSASIFKKNYNNVKVASYVEIPYTTNNADVEITYTTNAPSRPESKARRRLDFTNMTPLPCCIDDGSFAKPLL.

This is an uncharacterized protein from Autographa californica nuclear polyhedrosis virus (AcMNPV).